Consider the following 383-residue polypeptide: Cytochrome b (383 aa).

4 helical membrane passes run 32–52 (VGSL…FLAM), 76–98 (WLMR…LHMG), 113–133 (VWSM…MGYC), and 179–199 (FFAL…MHFM). Heme b contacts are provided by histidine 82 and histidine 96. 2 residues coordinate heme b: histidine 183 and histidine 197. Residue histidine 202 coordinates a ubiquinone. The next 4 helical transmembrane spans lie at 225–245 (FVFK…LFVF), 289–309 (LGGV…PMTD), 321–341 (LSKL…NMGQ), and 348–368 (FIEL…MLVP).

The protein belongs to the cytochrome b family. As to quaternary structure, fungal cytochrome b-c1 complex contains 10 subunits; 3 respiratory subunits, 2 core proteins and 5 low-molecular weight proteins. Cytochrome b-c1 complex is a homodimer. Heme b is required as a cofactor.

Its subcellular location is the mitochondrion inner membrane. Its function is as follows. Component of the ubiquinol-cytochrome c reductase complex (complex III or cytochrome b-c1 complex) that is part of the mitochondrial respiratory chain. The b-c1 complex mediates electron transfer from ubiquinol to cytochrome c. Contributes to the generation of a proton gradient across the mitochondrial membrane that is then used for ATP synthesis. This is Cytochrome b (COB) from Debaryomyces hansenii (strain ATCC 36239 / CBS 767 / BCRC 21394 / JCM 1990 / NBRC 0083 / IGC 2968) (Yeast).